The sequence spans 82 residues: Putative antitoxin RelB1 (82 aa).

Antitoxin component of a type II toxin-antitoxin (TA) system. Its cognate toxin is RelE1 (Potential). The sequence is that of Putative antitoxin RelB1 (relB1) from Methanocaldococcus jannaschii (strain ATCC 43067 / DSM 2661 / JAL-1 / JCM 10045 / NBRC 100440) (Methanococcus jannaschii).